Consider the following 378-residue polypeptide: tRNA-specific 2-thiouridylase MnmA (378 aa).

Residues 9–16 (GVSGGVDS) and M35 each bind ATP. Positions 94–96 (NPD) are interaction with target base in tRNA. Catalysis depends on C99, which acts as the Nucleophile. A disulfide bridge connects residues C99 and C195. G123 contributes to the ATP binding site. Residues 145 to 147 (KDQ) form an interaction with tRNA region. The Cysteine persulfide intermediate role is filled by C195. The tract at residues 307-308 (RY) is interaction with tRNA.

It belongs to the MnmA/TRMU family.

It is found in the cytoplasm. The catalysed reaction is S-sulfanyl-L-cysteinyl-[protein] + uridine(34) in tRNA + AH2 + ATP = 2-thiouridine(34) in tRNA + L-cysteinyl-[protein] + A + AMP + diphosphate + H(+). Its function is as follows. Catalyzes the 2-thiolation of uridine at the wobble position (U34) of tRNA, leading to the formation of s(2)U34. The polypeptide is tRNA-specific 2-thiouridylase MnmA (Xanthomonas oryzae pv. oryzae (strain MAFF 311018)).